A 660-amino-acid chain; its full sequence is Methionine--tRNA ligase 1 (660 aa).

A 'HIGH' region motif is present at residues 15–25 (YYPSGKLHIGH). The short motif at 310–314 (KMSKS) is the 'KMSKS' region element. Position 313 (Lys-313) interacts with ATP. In terms of domain architecture, tRNA-binding spans 560–660 (DFFKVELRVA…QNIPNGTKIK (101 aa)).

This sequence belongs to the class-I aminoacyl-tRNA synthetase family. MetG type 2B subfamily. Homodimer.

The protein localises to the cytoplasm. The enzyme catalyses tRNA(Met) + L-methionine + ATP = L-methionyl-tRNA(Met) + AMP + diphosphate. Functionally, is required not only for elongation of protein synthesis but also for the initiation of all mRNA translation through initiator tRNA(fMet) aminoacylation. The sequence is that of Methionine--tRNA ligase 1 from Bacillus anthracis.